The sequence spans 95 residues: ESAT-6-like protein EsxA (95 aa).

This sequence belongs to the WXG100 family. ESAT-6 subfamily. Forms a tight 1:1 complex with EsxB. An artificial EsxA-EsxB heterodimer interacts with EspA.

The protein resides in the secreted. In terms of biological role, an exported protein. Unlike its M.tuberculosis counterpart has poor pore forming ability in artificial liposomes, does not undergo conformational change at acidic pH. Mutation of 2 residues to those found in M.tuberculosis (25-TA-26 to IH) alters the properties of this protein so that it inserts into liposomes at acidic pH, forming pores, like its M.tuberculosis counterpart. In Mycolicibacterium smegmatis (strain ATCC 700084 / mc(2)155) (Mycobacterium smegmatis), this protein is ESAT-6-like protein EsxA.